Here is a 482-residue protein sequence, read N- to C-terminus: tRNA sulfurtransferase (482 aa).

The THUMP domain maps to 61–165 (KETLEVLTQT…NDKLNQVIER (105 aa)). ATP-binding positions include 183-184 (LI), Lys-265, Gly-287, and Gln-296. A disulfide bridge links Cys-344 with Cys-456. A Rhodanese domain is found at 404–482 (VAEHAVVLDI…GFHNVKVYRP (79 aa)). The active-site Cysteine persulfide intermediate is the Cys-456.

It belongs to the ThiI family.

The protein resides in the cytoplasm. The enzyme catalyses [ThiI sulfur-carrier protein]-S-sulfanyl-L-cysteine + a uridine in tRNA + 2 reduced [2Fe-2S]-[ferredoxin] + ATP + H(+) = [ThiI sulfur-carrier protein]-L-cysteine + a 4-thiouridine in tRNA + 2 oxidized [2Fe-2S]-[ferredoxin] + AMP + diphosphate. The catalysed reaction is [ThiS sulfur-carrier protein]-C-terminal Gly-Gly-AMP + S-sulfanyl-L-cysteinyl-[cysteine desulfurase] + AH2 = [ThiS sulfur-carrier protein]-C-terminal-Gly-aminoethanethioate + L-cysteinyl-[cysteine desulfurase] + A + AMP + 2 H(+). Its pathway is cofactor biosynthesis; thiamine diphosphate biosynthesis. Functionally, catalyzes the ATP-dependent transfer of a sulfur to tRNA to produce 4-thiouridine in position 8 of tRNAs, which functions as a near-UV photosensor. Also catalyzes the transfer of sulfur to the sulfur carrier protein ThiS, forming ThiS-thiocarboxylate. This is a step in the synthesis of thiazole, in the thiamine biosynthesis pathway. The sulfur is donated as persulfide by IscS. In Vibrio atlanticus (strain LGP32) (Vibrio splendidus (strain Mel32)), this protein is tRNA sulfurtransferase.